Reading from the N-terminus, the 704-residue chain is DNA ligase (704 aa).

Residues 44-48 (DYEYD), 93-94 (SI), and glutamate 125 contribute to the NAD(+) site. The active-site N6-AMP-lysine intermediate is the lysine 127. Residues arginine 148, glutamate 184, lysine 300, and lysine 324 each contribute to the NAD(+) site. Zn(2+)-binding residues include cysteine 418, cysteine 421, cysteine 436, and cysteine 442. A BRCT domain is found at 625-704 (IISSNISGKI…DEWEHLINEK (80 aa)).

The protein belongs to the NAD-dependent DNA ligase family. LigA subfamily. It depends on Mg(2+) as a cofactor. Mn(2+) serves as cofactor.

It catalyses the reaction NAD(+) + (deoxyribonucleotide)n-3'-hydroxyl + 5'-phospho-(deoxyribonucleotide)m = (deoxyribonucleotide)n+m + AMP + beta-nicotinamide D-nucleotide.. Its function is as follows. DNA ligase that catalyzes the formation of phosphodiester linkages between 5'-phosphoryl and 3'-hydroxyl groups in double-stranded DNA using NAD as a coenzyme and as the energy source for the reaction. It is essential for DNA replication and repair of damaged DNA. This is DNA ligase from Pelobacter propionicus (strain DSM 2379 / NBRC 103807 / OttBd1).